Here is a 170-residue protein sequence, read N- to C-terminus: Small ribosomal subunit protein uS4 (170 aa).

Residues 100 to 164 form the S4 RNA-binding domain; the sequence is RRLQTVVYRE…SDLTDELHPA (65 aa).

This sequence belongs to the universal ribosomal protein uS4 family. As to quaternary structure, part of the 30S ribosomal subunit. Contacts protein S5. The interaction surface between S4 and S5 is involved in control of translational fidelity.

One of the primary rRNA binding proteins, it binds directly to 16S rRNA where it nucleates assembly of the body of the 30S subunit. In terms of biological role, with S5 and S12 plays an important role in translational accuracy. This chain is Small ribosomal subunit protein uS4, found in Halobacterium salinarum (strain ATCC 29341 / DSM 671 / R1).